Reading from the N-terminus, the 316-residue chain is L-lactate dehydrogenase (316 aa).

NAD(+)-binding positions include valine 15, aspartate 37, lysine 42, tyrosine 68, and 82 to 83 (GL). Substrate is bound by residues glutamine 85, arginine 91, and 123 to 126 (NPVD). NAD(+) contacts are provided by residues 121 to 123 (ASN) and threonine 146. Position 151–154 (151–154 (DTSR)) interacts with substrate. The beta-D-fructose 1,6-bisphosphate site is built by arginine 156 and histidine 171. Histidine 178 serves as the catalytic Proton acceptor. The residue at position 222 (tyrosine 222) is a Phosphotyrosine. Substrate is bound at residue threonine 231.

It belongs to the LDH/MDH superfamily. LDH family. Homotetramer.

The protein resides in the cytoplasm. It catalyses the reaction (S)-lactate + NAD(+) = pyruvate + NADH + H(+). It functions in the pathway fermentation; pyruvate fermentation to lactate; (S)-lactate from pyruvate: step 1/1. With respect to regulation, allosterically activated by fructose 1,6-bisphosphate (FBP). Its function is as follows. Catalyzes the conversion of lactate to pyruvate. The chain is L-lactate dehydrogenase from Borreliella burgdorferi (strain ATCC 35210 / DSM 4680 / CIP 102532 / B31) (Borrelia burgdorferi).